The chain runs to 182 residues: Probable pyruvoyl-dependent arginine decarboxylase (182 aa).

Residue S43 is modified to Pyruvic acid (Ser).

Belongs to the PdaD family. Pyruvate serves as cofactor.

The enzyme catalyses L-arginine + H(+) = agmatine + CO2. In Chloroherpeton thalassium (strain ATCC 35110 / GB-78), this protein is Probable pyruvoyl-dependent arginine decarboxylase.